The sequence spans 80 residues: Exodeoxyribonuclease 7 small subunit (80 aa).

The protein belongs to the XseB family. In terms of assembly, heterooligomer composed of large and small subunits.

It localises to the cytoplasm. It catalyses the reaction Exonucleolytic cleavage in either 5'- to 3'- or 3'- to 5'-direction to yield nucleoside 5'-phosphates.. In terms of biological role, bidirectionally degrades single-stranded DNA into large acid-insoluble oligonucleotides, which are then degraded further into small acid-soluble oligonucleotides. The sequence is that of Exodeoxyribonuclease 7 small subunit from Pseudomonas putida (strain GB-1).